Here is an 833-residue protein sequence, read N- to C-terminus: Phenylalanine--tRNA ligase beta subunit (833 aa).

The tRNA-binding domain occupies 42–157 (ADLKGPLAVG…PEYEVGTDAI (116 aa)). In terms of domain architecture, B5 spans 411-485 (SAPHTITIPA…RLEGYENLPS (75 aa)). Residues aspartate 463, aspartate 469, glutamate 472, and glutamate 473 each coordinate Mg(2+). An FDX-ACB domain is found at 739 to 832 (STFPVATQDV…AAERTGAALR (94 aa)).

This sequence belongs to the phenylalanyl-tRNA synthetase beta subunit family. Type 1 subfamily. Tetramer of two alpha and two beta subunits. Mg(2+) serves as cofactor.

Its subcellular location is the cytoplasm. The catalysed reaction is tRNA(Phe) + L-phenylalanine + ATP = L-phenylalanyl-tRNA(Phe) + AMP + diphosphate + H(+). This Streptomyces avermitilis (strain ATCC 31267 / DSM 46492 / JCM 5070 / NBRC 14893 / NCIMB 12804 / NRRL 8165 / MA-4680) protein is Phenylalanine--tRNA ligase beta subunit.